A 221-amino-acid chain; its full sequence is Phosphatidylserine decarboxylase proenzyme (221 aa).

Catalysis depends on Ser189, which acts as the Schiff-base intermediate with substrate; via pyruvic acid. At Ser189 the chain carries Pyruvic acid (Ser); by autocatalysis.

It belongs to the phosphatidylserine decarboxylase family. PSD-A subfamily. In terms of assembly, heterodimer of a large membrane-associated beta subunit and a small pyruvoyl-containing alpha subunit. Pyruvate is required as a cofactor. Is synthesized initially as an inactive proenzyme. Formation of the active enzyme involves a self-maturation process in which the active site pyruvoyl group is generated from an internal serine residue via an autocatalytic post-translational modification. Two non-identical subunits are generated from the proenzyme in this reaction, and the pyruvate is formed at the N-terminus of the alpha chain, which is derived from the carboxyl end of the proenzyme. The post-translation cleavage follows an unusual pathway, termed non-hydrolytic serinolysis, in which the side chain hydroxyl group of the serine supplies its oxygen atom to form the C-terminus of the beta chain, while the remainder of the serine residue undergoes an oxidative deamination to produce ammonia and the pyruvoyl prosthetic group on the alpha chain.

It localises to the cell membrane. It carries out the reaction a 1,2-diacyl-sn-glycero-3-phospho-L-serine + H(+) = a 1,2-diacyl-sn-glycero-3-phosphoethanolamine + CO2. Its pathway is phospholipid metabolism; phosphatidylethanolamine biosynthesis; phosphatidylethanolamine from CDP-diacylglycerol: step 2/2. Functionally, catalyzes the formation of phosphatidylethanolamine (PtdEtn) from phosphatidylserine (PtdSer). The sequence is that of Phosphatidylserine decarboxylase proenzyme from Porphyromonas gingivalis (strain ATCC 33277 / DSM 20709 / CIP 103683 / JCM 12257 / NCTC 11834 / 2561).